We begin with the raw amino-acid sequence, 410 residues long: Indoleamine 2,3-dioxygenase nanC (410 aa).

His-309 provides a ligand contact to heme.

The protein belongs to the indoleamine 2,3-dioxygenase family. Heme is required as a cofactor.

The catalysed reaction is D-tryptophan + O2 = N-formyl-D-kynurenine. The enzyme catalyses L-tryptophan + O2 = N-formyl-L-kynurenine. The protein operates within secondary metabolite biosynthesis. Its function is as follows. Indoleamine 2,3-dioxygenase; part of the gene cluster that mediates the biosynthesis of the benzazepine alkaloid nanangelenin A which contains an unprecedented 3,4-dihydro-1-benzazepine-2,5-dione-N-prenyl-N-acetoxy-anthranilamide scaffold. The first step of nanangelenin biosynthesis is catalyzed by the indoleamine 2,3-dioxygenase nanC which produces N-formyl-kynurenine through the catabolism of tryptophan. The two-module NRPS nanA then utilizes anthranilate (Ant) and L-kynurenine (L-Kyn) to assemble the dipeptide product nanangelenin B. The first adenylation domain of nanA (A1) loads anthranilate onto the T1 domain, while A2 loads kynurenine, generated through spontaneous nonenzymatic deformylation of the nanC-supplied N-formyl-kynurenine. The peptide bond formation between the tethered amino acids is catalyzed by the first condensation domain (C1) between anthranilate's carbonyl carbon and kynurenine's aliphatic primary amine. The second C domain (C2) catalyzes the final cyclization event between the aromatic amine of kynurenine and the tethered carbonyl carbon, yielding nanangelenin B. The terminal T3 domain enhances the catalytic efficiency of C2, suggesting the T2-tethered Ant-L-Kyn is transferred to T3 prior to cyclization by C2. Once released from nanA, nanangelenin B is then prenylated by the prenyltransferase nanD to form nanangelenin C. Nanangelenin C is then N-hydroxylated by the FAD-dependent monooxygenase nanF and further acetylated by the acetyltransferase nanB to yield nanangelenin F. Finally, the N-methyltransferase nanE methylates the amide nitrogen of 1-benzazepine to convert nanangelenin F into nanangelenin A. NanE is also able to methylate most of the intermediates of the pathway such as nanangelenin B and nanangelenin C to produce nanangelenin D and nanangelenin E, respectively. In Aspergillus nanangensis, this protein is Indoleamine 2,3-dioxygenase nanC.